A 597-amino-acid chain; its full sequence is DNA polymerase III subunit gamma/tau (597 aa).

44–51 (GERGTGKT) contacts ATP. Positions 63, 72, 75, and 78 each coordinate Zn(2+).

This sequence belongs to the DnaX/STICHEL family. DNA polymerase III contains a core (composed of alpha, epsilon and theta chains) that associates with a tau subunit. This core dimerizes to form the POLIII' complex. PolIII' associates with the gamma complex (composed of gamma, delta, delta', psi and chi chains) and with the beta chain to form the complete DNA polymerase III complex.

The enzyme catalyses DNA(n) + a 2'-deoxyribonucleoside 5'-triphosphate = DNA(n+1) + diphosphate. Functionally, DNA polymerase III is a complex, multichain enzyme responsible for most of the replicative synthesis in bacteria. This DNA polymerase also exhibits 3' to 5' exonuclease activity. This Mycoplasma genitalium (strain ATCC 33530 / DSM 19775 / NCTC 10195 / G37) (Mycoplasmoides genitalium) protein is DNA polymerase III subunit gamma/tau (dnaX).